The primary structure comprises 380 residues: Cytochrome b (380 aa).

Helical transmembrane passes span 34 to 54 (FGSL…LLAT), 78 to 99 (WLIR…YLHI), 114 to 134 (WNTG…GYVL), and 179 to 199 (FFAL…IHLA). Heme b-binding residues include histidine 84 and histidine 98. Positions 183 and 197 each coordinate heme b. A ubiquinone is bound at residue histidine 202. Transmembrane regions (helical) follow at residues 227–247 (LKDI…ALFS), 289–309 (LGGV…PFLH), 321–341 (LSQI…WIGS), and 348–368 (FIII…ILFP).

This sequence belongs to the cytochrome b family. In terms of assembly, the cytochrome bc1 complex contains 11 subunits: 3 respiratory subunits (MT-CYB, CYC1 and UQCRFS1), 2 core proteins (UQCRC1 and UQCRC2) and 6 low-molecular weight proteins (UQCRH/QCR6, UQCRB/QCR7, UQCRQ/QCR8, UQCR10/QCR9, UQCR11/QCR10 and a cleavage product of UQCRFS1). This cytochrome bc1 complex then forms a dimer. It depends on heme b as a cofactor.

The protein resides in the mitochondrion inner membrane. Functionally, component of the ubiquinol-cytochrome c reductase complex (complex III or cytochrome b-c1 complex) that is part of the mitochondrial respiratory chain. The b-c1 complex mediates electron transfer from ubiquinol to cytochrome c. Contributes to the generation of a proton gradient across the mitochondrial membrane that is then used for ATP synthesis. This chain is Cytochrome b (MT-CYB), found in Callipepla gambelii (Gambel's quail).